A 218-amino-acid chain; its full sequence is Probable transaldolase (218 aa).

Residue Lys-87 is the Schiff-base intermediate with substrate of the active site.

Belongs to the transaldolase family. Type 3B subfamily.

The protein localises to the cytoplasm. It catalyses the reaction D-sedoheptulose 7-phosphate + D-glyceraldehyde 3-phosphate = D-erythrose 4-phosphate + beta-D-fructose 6-phosphate. It functions in the pathway carbohydrate degradation; pentose phosphate pathway; D-glyceraldehyde 3-phosphate and beta-D-fructose 6-phosphate from D-ribose 5-phosphate and D-xylulose 5-phosphate (non-oxidative stage): step 2/3. Its function is as follows. Transaldolase is important for the balance of metabolites in the pentose-phosphate pathway. The protein is Probable transaldolase of Phocaeicola vulgatus (strain ATCC 8482 / DSM 1447 / JCM 5826 / CCUG 4940 / NBRC 14291 / NCTC 11154) (Bacteroides vulgatus).